Reading from the N-terminus, the 305-residue chain is Aspartate carbamoyltransferase catalytic subunit (305 aa).

Carbamoyl phosphate contacts are provided by R60 and T61. K88 contacts L-aspartate. Residues R110, H138, and Q141 each contribute to the carbamoyl phosphate site. Residues R171 and R222 each contribute to the L-aspartate site. Carbamoyl phosphate contacts are provided by A263 and P264.

It belongs to the aspartate/ornithine carbamoyltransferase superfamily. ATCase family. In terms of assembly, heterododecamer (2C3:3R2) of six catalytic PyrB chains organized as two trimers (C3), and six regulatory PyrI chains organized as three dimers (R2).

The catalysed reaction is carbamoyl phosphate + L-aspartate = N-carbamoyl-L-aspartate + phosphate + H(+). It participates in pyrimidine metabolism; UMP biosynthesis via de novo pathway; (S)-dihydroorotate from bicarbonate: step 2/3. In terms of biological role, catalyzes the condensation of carbamoyl phosphate and aspartate to form carbamoyl aspartate and inorganic phosphate, the committed step in the de novo pyrimidine nucleotide biosynthesis pathway. This Halalkalibacterium halodurans (strain ATCC BAA-125 / DSM 18197 / FERM 7344 / JCM 9153 / C-125) (Bacillus halodurans) protein is Aspartate carbamoyltransferase catalytic subunit.